A 284-amino-acid polypeptide reads, in one-letter code: Probable endonuclease 4 (284 aa).

Residues His-69, His-113, Glu-148, Asp-182, His-185, His-217, Asp-230, His-232, and Glu-262 each coordinate Zn(2+).

It belongs to the AP endonuclease 2 family. Zn(2+) is required as a cofactor.

The enzyme catalyses Endonucleolytic cleavage to 5'-phosphooligonucleotide end-products.. In terms of biological role, endonuclease IV plays a role in DNA repair. It cleaves phosphodiester bonds at apurinic or apyrimidinic (AP) sites, generating a 3'-hydroxyl group and a 5'-terminal sugar phosphate. In Bifidobacterium longum subsp. infantis (strain ATCC 15697 / DSM 20088 / JCM 1222 / NCTC 11817 / S12), this protein is Probable endonuclease 4.